Consider the following 395-residue polypeptide: GPI-anchor transamidase (395 aa).

The first 27 residues, 1–27 (MAVTDSLSRAATVLATVLLLSFGSVAA), serve as a signal peptide directing secretion. Topologically, residues 28 to 368 (SHIEDQAEQF…PKLKDWHPPG (341 aa)) are lumenal. Ca(2+)-binding residues include Asp-79, Ile-82, Glu-118, and Asp-120. Catalysis depends on His-164, which acts as the Proton donor. Cys-206 (nucleophile; acyl-thioester intermediate) is an active-site residue. A protein contacts are provided by Cys-206, Ser-232, and Ser-234. Positions 231-236 (DSLSHQ) are autoinhibitory loop. Cys-275 and Cys-280 are joined by a disulfide. Residues 369–385 (GFILGLWALIIMVFFKT) traverse the membrane as a helical segment. At 386 to 395 (YGIKHMKFIF) the chain is on the cytoplasmic side.

The protein belongs to the peptidase C13 family. In terms of assembly, heteropentamer. Part of the GPI-anchor transamidase complex, consisting of PIGK, PIGT, PIGS, PIGU and GAA1. Interacts with GPAA1. Interacts with PIGT; this interaction, via a disulfide link, stabilizes the expression of GAA1 and PIGK and links them to PIGS. In terms of processing, the disulfide bond between PIGK/GPI8 and PIGT is important for normal enzyme activity.

It localises to the endoplasmic reticulum membrane. Its pathway is glycolipid biosynthesis; glycosylphosphatidylinositol-anchor biosynthesis. With respect to regulation, in the absence of proproteins substrates, exists in an inactive state with a disrupted catalytic site by an autoinhibitory loop. The binding of proprotein substrates, particularly the CSP region, to GPI-T triggers concerted conformational changes that alleviate the inhibition by the autoinhibitory loop. Meanwhile, proprotein residues near the omega- site induce the formation of a catalytic cleft for catalysis, following which the products are released and GPI-T reverts to the inactive state. Its function is as follows. Catalytic subunit of the glycosylphosphatidylinositol-anchor (GPI-anchor) transamidase (GPI-T) complex that catalyzes the formation of the linkage between a proprotein and a GPI-anchor and participates in GPI anchored protein biosynthesis. Recognizes diverse proproteins at a C-terminal signal peptide (CSP) region that lacks consensus sequence and replaces it with a GPI-anchor via a transamidation reaction. Transamidation catalysis reaction follows a two-phase mechanism. In the acyl-enzyme phase, the carbonyl group of the proproteins's omega-site undergoes a nucleophilic attack forming an enzyme-substrate thioester bond. Followed by a general acid catalysis that allows CSP releasing, regenerating the carbonyl, and forming the acyl-enzyme intermediate. In the GPI-anchor attachment phase, the amino group of the GPI-anchor's ethanolamine phosphate, the one on third mannose (EtNP3), mediates a nucleophilic attack on the carbonyl of the acyl-enzyme intermediate, replacing the CSP, allowing GPI-anchor attachment to the omega-residue, therefore forming the product and freeing the enzyme. In Homo sapiens (Human), this protein is GPI-anchor transamidase.